A 330-amino-acid chain; its full sequence is Putative UV-damage endonuclease (330 aa).

It belongs to the uve1/UvsE family.

It localises to the virion. Endonuclease for the repair of UV-irradiated DNA. In Acanthamoeba polyphaga mimivirus (APMV), this protein is Putative UV-damage endonuclease.